A 296-amino-acid chain; its full sequence is Probable lipid kinase YegS-like (296 aa).

The DAGKc domain occupies 1 to 130; the sequence is MPHTLLILNG…IDLAQVNDKH (130 aa). ATP is bound by residues T37, 63–69, and T92; that span reads GDGTINE. L212, D215, and L217 together coordinate Mg(2+). The Proton acceptor role is filled by E268.

The protein belongs to the diacylglycerol/lipid kinase family. YegS lipid kinase subfamily. Mg(2+) serves as cofactor. The cofactor is Ca(2+).

The protein localises to the cytoplasm. In terms of biological role, probably phosphorylates lipids; the in vivo substrate is unknown. The protein is Probable lipid kinase YegS-like of Yersinia enterocolitica serotype O:8 / biotype 1B (strain NCTC 13174 / 8081).